Here is a 98-residue protein sequence, read N- to C-terminus: Large ribosomal subunit protein uL23 (98 aa).

The protein belongs to the universal ribosomal protein uL23 family. In terms of assembly, part of the 50S ribosomal subunit. Contacts protein L29, and trigger factor when it is bound to the ribosome.

One of the early assembly proteins it binds 23S rRNA. One of the proteins that surrounds the polypeptide exit tunnel on the outside of the ribosome. Forms the main docking site for trigger factor binding to the ribosome. In Bordetella petrii (strain ATCC BAA-461 / DSM 12804 / CCUG 43448), this protein is Large ribosomal subunit protein uL23.